We begin with the raw amino-acid sequence, 511 residues long: Phosphoenolpyruvate carboxylase (511 aa).

Belongs to the PEPCase type 2 family. As to quaternary structure, homotetramer. Mg(2+) is required as a cofactor.

It catalyses the reaction oxaloacetate + phosphate = phosphoenolpyruvate + hydrogencarbonate. Its function is as follows. Catalyzes the irreversible beta-carboxylation of phosphoenolpyruvate (PEP) to form oxaloacetate (OAA), a four-carbon dicarboxylic acid source for the tricarboxylic acid cycle. This is Phosphoenolpyruvate carboxylase from Saccharolobus islandicus (strain M.16.27) (Sulfolobus islandicus).